A 721-amino-acid chain; its full sequence is Glucans biosynthesis glucosyltransferase H (721 aa).

6 helical membrane-spanning segments follow: residues 53 to 75 (VLIM…QVLQ), 85 to 107 (VVLV…ALAG), 404 to 426 (GIGA…LISL), 456 to 478 (WVFA…LVLI), 490 to 512 (LRTF…VMMV), and 567 to 589 (WPLL…VALL).

Belongs to the glycosyltransferase 2 family. OpgH subfamily.

The protein localises to the cell inner membrane. The protein operates within glycan metabolism; osmoregulated periplasmic glucan (OPG) biosynthesis. Its function is as follows. Involved in the biosynthesis of osmoregulated periplasmic glucans (OPGs). This Rhodopseudomonas palustris (strain ATCC BAA-98 / CGA009) protein is Glucans biosynthesis glucosyltransferase H.